Here is a 242-residue protein sequence, read N- to C-terminus: MLHNPLVQFDIKKLIDIKVMDFDISFTNSAAYMLLASVLALTYFYLAFSNPRLVPSRLQISGEIIYNLVTDMLNQNVGSKGRKFVPVIFTLFVFILFCNLFGMIPYGFTVTSHIIITFALAILVFLMVTIVGFVKHGMHFLSLFLPHGTPLWLAPLMIIIELFTYLARPASLSLRLAANMMAGHILLKVIASFVVTLMIYLKFLPIPLMVILIGFEIFVAILQAYIFTILSCVYLNDAVNLH.

Helical transmembrane passes span 29–49 (SAAYMLLASVLALTYFYLAFS), 84–104 (FVPVIFTLFVFILFCNLFGMI), 114–134 (IIITFALAILVFLMVTIVGFV), 140–160 (FLSLFLPHGTPLWLAPLMIII), 189–209 (VIASFVVTLMIYLKFLPIPLM), and 210–230 (VILIGFEIFVAILQAYIFTIL).

This sequence belongs to the ATPase A chain family. As to quaternary structure, F-type ATPases have 2 components, CF(1) - the catalytic core - and CF(0) - the membrane proton channel. CF(1) has five subunits: alpha(3), beta(3), gamma(1), delta(1), epsilon(1). CF(0) has three main subunits: a(1), b(2) and c(9-12). The alpha and beta chains form an alternating ring which encloses part of the gamma chain. CF(1) is attached to CF(0) by a central stalk formed by the gamma and epsilon chains, while a peripheral stalk is formed by the delta and b chains.

Its subcellular location is the cell inner membrane. Functionally, key component of the proton channel; it plays a direct role in the translocation of protons across the membrane. The polypeptide is ATP synthase subunit a (Rickettsia bellii (strain RML369-C)).